A 180-amino-acid polypeptide reads, in one-letter code: Large ribosomal subunit protein uL6 (180 aa).

The protein belongs to the universal ribosomal protein uL6 family. Part of the 50S ribosomal subunit.

Functionally, this protein binds to the 23S rRNA, and is important in its secondary structure. It is located near the subunit interface in the base of the L7/L12 stalk, and near the tRNA binding site of the peptidyltransferase center. This chain is Large ribosomal subunit protein uL6, found in Anaeromyxobacter sp. (strain Fw109-5).